Reading from the N-terminus, the 1571-residue chain is Phospholipid-transporting ATPase DNF1 (1571 aa).

A disordered region spans residues 1 to 94; that stretch reads MSGTFHGDGH…TPKLNNGSGT (94 aa). The Cytoplasmic segment spans residues 1 to 214; sequence MSGTFHGDGH…TFLPKNILFQ (214 aa). The span at 29-40 shows a compositional bias: basic and acidic residues; it reads EDTHIAPTHFDD. Residues 42–56 show a composition bias toward polar residues; it reads ATSNKYSRPQVSFND. At S53 the chain carries Phosphoserine. Residues 66–76 show a composition bias toward acidic residues; that stretch reads AEEFTFNDDTE. At T70 the chain carries Phosphothreonine. Positions 80-93 are enriched in polar residues; that stretch reads HSFQPTPKLNNGSG. A Phosphoserine modification is found at S81. T85 carries the phosphothreonine modification. Phosphoserine is present on S92. T94 carries the post-translational modification Phosphothreonine. S104 carries the post-translational modification Phosphoserine. T109 carries the phosphothreonine modification. A helical membrane pass occupies residues 215–235; that stretch reads FHNFANVYFLVLIILGAFQIF. The segment at 234 to 241 is involved in phosphatidylcholine substrate selection; it reads IFGVTNPG. The Extracellular segment spans residues 236-239; that stretch reads GVTN. Residues 240–260 form a helical membrane-spanning segment; that stretch reads PGLSAVPLVVIVIITAIKDAI. Residues 261–553 lie on the Cytoplasmic side of the membrane; it reads EDSRRTVLDL…RISRELNFSV (293 aa). Phosphoserine is present on residues S351, S354, S358, and S365. A Phosphotyrosine modification is found at Y368. Residues 554 to 574 form a helical membrane-spanning segment; sequence VINFVLLFILCFVSGIANGVY. The Extracellular portion of the chain corresponds to 575–594; it reads YDKKGRSRFSYEFGTIAGSA. The involved in phosphatidylcholine substrate selection stretch occupies residues 586-590; that stretch reads EFGTI. Residues 595-615 traverse the membrane as a helical segment; that stretch reads ATNGFVSFWVAVILYQSLVPI. Residues 616–1188 are Cytoplasmic-facing; the sequence is SLYISVEIIK…WSYKRLAEMI (573 aa). D667 acts as the 4-aspartylphosphate intermediate in catalysis. 8 residues coordinate ATP: D667, K668, T669, E801, F842, S844, K847, and K871. A Mg(2+)-binding site is contributed by D667. T669 is a Mg(2+) binding site. A Glycyl lysine isopeptide (Lys-Gly) (interchain with G-Cter in ubiquitin) cross-link involves residue K895. ATP is bound by residues R909, T910, T989, G990, D991, R1104, and K1110. D1130 is a Mg(2+) binding site. Residues N1133 and D1134 each coordinate ATP. D1134 serves as a coordination point for Mg(2+). Residues 1189–1209 form a helical membrane-spanning segment; that stretch reads PEFFYKNMIFALALFWYGIYN. Residues 1210–1219 are Extracellular-facing; sequence DFDGSYLYEY. The chain crosses the membrane as a helical span at residues 1220 to 1240; sequence TYMMFYNLAFTSLPVIFLGIL. The Cytoplasmic segment spans residues 1241-1270; it reads DQDVNDTISLVVPQLYRVGILRKEWNQRKF. Residues 1271–1291 traverse the membrane as a helical segment; sequence LWYMLDGLYQSIICFFFPYLV. Over 1292–1307 the chain is Extracellular; it reads YHKNMIVTSNGLGLDH. A helical membrane pass occupies residues 1308–1328; it reads RYFVGVYVTTIAVISCNTYVL. Topologically, residues 1329–1334 are cytoplasmic; it reads LHQYRW. A helical membrane pass occupies residues 1335 to 1355; sequence DWFSGLFIALSCLVVFAWTGI. At 1356–1375 the chain is on the extracellular side; sequence WSSAIASREFFKAAARIYGA. The chain crosses the membrane as a helical span at residues 1376 to 1396; that stretch reads PSFWAVFFVAVLFCLLPRFTY. A 1,2-diacyl-sn-glycero-3-phospho-L-serine is bound at residue R1393. Residues 1397–1571 lie on the Cytoplasmic side of the membrane; it reads DSFQKFFYPT…ASLIGTQQNN (175 aa). The residue at position 1506 (S1506) is a Phosphoserine. The residue at position 1551 (T1551) is a Phosphothreonine. A phosphoserine mark is found at S1552 and S1563.

The protein belongs to the cation transport ATPase (P-type) (TC 3.A.3) family. Type IV subfamily. As to quaternary structure, component of a flippase complex consisting of DNF1 and LEM3. Interacts with LEM3; the interaction is direct and required for their mutual export from the endoplasmic reticulum. It depends on Mg(2+) as a cofactor. Post-translationally, phosphorylated by FPK1 and KIN82.

Its subcellular location is the cell membrane. The protein localises to the endosome membrane. The protein resides in the golgi apparatus. It localises to the trans-Golgi network membrane. It is found in the cell septum. Its subcellular location is the bud. The enzyme catalyses ATP + H2O + phospholipidSide 1 = ADP + phosphate + phospholipidSide 2.. It catalyses the reaction a 1,2-diacyl-sn-glycero-3-phosphoethanolamine(out) + ATP + H2O = a 1,2-diacyl-sn-glycero-3-phosphoethanolamine(in) + ADP + phosphate + H(+). It carries out the reaction a 1,2-diacyl-sn-glycero-3-phosphocholine(out) + ATP + H2O = a 1,2-diacyl-sn-glycero-3-phosphocholine(in) + ADP + phosphate + H(+). The catalysed reaction is a beta-D-glucosyl-(1&lt;-&gt;1')-N-acylsphing-4-enine(out) + ATP + H2O = a beta-D-glucosyl-(1&lt;-&gt;1')-N-acylsphing-4-enine(in) + ADP + phosphate + H(+). The enzyme catalyses a 1,2-diacyl-sn-glycero-3-phospho-L-serine(out) + ATP + H2O = a 1,2-diacyl-sn-glycero-3-phospho-L-serine(in) + ADP + phosphate + H(+). Its function is as follows. Catalytic component of a P4-ATPase flippase complex which catalyzes the hydrolysis of ATP coupled to the transport of glucosylceramide, phosphatidylcholine, phosphatidylethanolamine, and small amounts of phosphatidylserine from the lumenal to the cytosolic leaflet of the cell membrane and ensures the maintenance of asymmetric distribution of phospholipids. Does not appear to transport sphingomyelin, inositol phosphoceramide, or phosphatidic acid. Required for efficient endocytosis. The sequence is that of Phospholipid-transporting ATPase DNF1 from Saccharomyces cerevisiae (strain ATCC 204508 / S288c) (Baker's yeast).